A 760-amino-acid chain; its full sequence is Dipeptidyl peptidase 4 (760 aa).

Topologically, residues 1-6 (MKTPWK) are cytoplasmic. Residues 7 to 28 (VLLGLLGVAALVTIITVPIVLL) form a helical; Signal-anchor for type II membrane protein membrane-spanning segment. Topologically, residues 29–760 (SKDEAAADSR…HFLQQCFSLH (732 aa)) are extracellular. Residues Asn83, Asn90, Asn144, Asn213, Asn223, Asn315, and Asn328 are each glycosylated (N-linked (GlcNAc...) asparagine). 4 disulfides stabilise this stretch: Cys322–Cys333, Cys379–Cys388, Cys438–Cys441, and Cys448–Cys466. A glycan (N-linked (GlcNAc...) asparagine) is linked at Asn514. The active-site Charge relay system is Ser624. Cys643 and Cys756 are oxidised to a cystine. Residue Asn679 is glycosylated (N-linked (GlcNAc...) asparagine). Active-site charge relay system residues include Asp702 and His734.

Belongs to the peptidase S9B family. DPPIV subfamily. As to quaternary structure, monomer. Homodimer. Heterodimer with Seprase (FAP). Requires homodimerization for optimal dipeptidyl peptidase activity and T-cell costimulation. Found in a membrane raft complex, at least composed of BCL10, CARD11, DPP4 and IKBKB. Associates with collagen. Interacts with PTPRC; the interaction is enhanced in an interleukin-12-dependent manner in activated lymphocytes. Interacts (via extracellular domain) with ADA; does not inhibit its dipeptidyl peptidase activity. Interacts with CAV1 (via the N-terminus); the interaction is direct. Interacts (via cytoplasmic tail) with CARD11 (via PDZ domain); its homodimerization is necessary for interaction with CARD11. Interacts with IGF2R; the interaction is direct. Interacts with GPC3. Post-translationally, the soluble form (Dipeptidyl peptidase 4 soluble form also named SDPP) derives from the membrane form (Dipeptidyl peptidase 4 membrane form also named MDPP) by proteolytic processing. N- and O-Glycosylated. In terms of processing, phosphorylated. Mannose 6-phosphate residues in the carbohydrate moiety are necessary for interaction with IGF2R in activated T-cells. Mannose 6-phosphorylation is induced during T-cell activation.

The protein localises to the secreted. It localises to the cell membrane. It is found in the apical cell membrane. Its subcellular location is the cell projection. The protein resides in the invadopodium membrane. The protein localises to the lamellipodium membrane. It localises to the cell junction. It is found in the membrane raft. It catalyses the reaction Release of an N-terminal dipeptide, Xaa-Yaa-|-Zaa-, from a polypeptide, preferentially when Yaa is Pro, provided Zaa is neither Pro nor hydroxyproline.. With respect to regulation, inhibited by GPC3 and diprotin A. In terms of biological role, cell surface glycoprotein receptor involved in the costimulatory signal essential for T-cell receptor (TCR)-mediated T-cell activation. Acts as a positive regulator of T-cell coactivation, by binding at least ADA, CAV1, IGF2R, and PTPRC. Its binding to CAV1 and CARD11 induces T-cell proliferation and NF-kappa-B activation in a T-cell receptor/CD3-dependent manner. Its interaction with ADA also regulates lymphocyte-epithelial cell adhesion. In association with FAP is involved in the pericellular proteolysis of the extracellular matrix (ECM), the migration and invasion of endothelial cells into the ECM. May be involved in the promotion of lymphatic endothelial cells adhesion, migration and tube formation. When overexpressed, enhanced cell proliferation, a process inhibited by GPC3. Also acts as a serine exopeptidase with a dipeptidyl peptidase activity that regulates various physiological processes by cleaving peptides in the circulation, including many chemokines, mitogenic growth factors, neuropeptides and peptide hormones. Removes N-terminal dipeptides sequentially from polypeptides having unsubstituted N-termini provided that the penultimate residue is proline. The polypeptide is Dipeptidyl peptidase 4 (Dpp4) (Mus musculus (Mouse)).